Reading from the N-terminus, the 373-residue chain is MSTAILVSLLRNGRCQVNRGALTLCFQKEHSCTTSTRHCFSANRRCFSSRFDLDGSGRPATWDSFGIWDNRIDEPIQLPPSIKYGKLIPHINLSKVGCSTQLGKRKENEDRFKLARLTPDILYFAVYDGHGGASAAEFCDRFMEDYIKEFLVEEHDMEKVLVKAFLEINKAFARHAHLSVDASLLTCGTTATVALLRDGIELVVASVGDSRALLCRRGKPFKLTIDHTPERKEEKLRIKKSGGFVTWNSLGQPNVNGRLAMTRSIGDLDLKSMGVIAEPETKRVKLQHTDDGFLVLTTDGINFIVNSQEICDIINQCHDPKEAAQVLTEQAIQYGTEDNSTAIVVPFGAWGKHKSSEVSFSFSRGFASSGRWD.

A PPM-type phosphatase domain is found at 95-347 (KVGCSTQLGK…DNSTAIVVPF (253 aa)). Residues D128, G129, and D338 each coordinate Mg(2+).

This sequence belongs to the PP2C family. The cofactor is Mg(2+). Mn(2+) is required as a cofactor.

It is found in the mitochondrion matrix. The enzyme catalyses O-phospho-L-seryl-[protein] + H2O = L-seryl-[protein] + phosphate. The catalysed reaction is O-phospho-L-threonyl-[protein] + H2O = L-threonyl-[protein] + phosphate. The protein is Protein phosphatase 1K, mitochondrial (ppm1k) of Xenopus laevis (African clawed frog).